The following is a 118-amino-acid chain: Transcription factor PAR2 (118 aa).

The disordered stretch occupies residues 1–59; sequence MEKTLATSHTKRSSPPSPSSAVNTSSTGFNRRTRQRLSDATASVSETDVEDEDEDEEGV. Positions 19–30 are enriched in polar residues; it reads SSAVNTSSTGFN. One can recognise a bHLH domain in the interval 43 to 92; the sequence is SVSETDVEDEDEDEEGVEEKIEALQTIVPGGTELGVDALFEETASYILAL. Acidic residues predominate over residues 47–59; it reads TDVEDEDEDEEGV.

It belongs to the bHLH protein family. Homodimer.

Its subcellular location is the nucleus. Its function is as follows. Atypical bHLH transcription factor that acts as a negative regulator of a variety of shade avoidance syndrome (SAS) responses, including seedling elongation and photosynthetic pigment accumulation. Acts as a direct transcriptional repressor of two auxin-responsive genes, SAUR15 and SAUR68. May function in integrating shade and hormone transcriptional networks in response to light and auxin changes. This is Transcription factor PAR2 (PAR2) from Arabidopsis thaliana (Mouse-ear cress).